Here is a 348-residue protein sequence, read N- to C-terminus: Sulfate/thiosulfate import ATP-binding protein CysA (348 aa).

The region spanning 3–233 (ILIDNISKKF…PATPFVFSLL (231 aa)) is the ABC transporter domain. 35–42 (GPSGSGKS) provides a ligand contact to ATP.

This sequence belongs to the ABC transporter superfamily. Sulfate/tungstate importer (TC 3.A.1.6) family.

It localises to the plastid. It is found in the chloroplast. The catalysed reaction is sulfate(out) + ATP + H2O = sulfate(in) + ADP + phosphate + H(+). It carries out the reaction thiosulfate(out) + ATP + H2O = thiosulfate(in) + ADP + phosphate + H(+). In terms of biological role, part of the ABC transporter complex involved in sulfate/thiosulfate import. Responsible for energy coupling to the transport system. This chain is Sulfate/thiosulfate import ATP-binding protein CysA, found in Mesostigma viride (Green alga).